A 336-amino-acid polypeptide reads, in one-letter code: 4-aminobenzoate N-oxygenase (336 aa).

4-nitrobenzoate is bound at residue Tyr-93. Residues Glu-101, Glu-136, His-139, and Glu-196 each contribute to the Fe cation site. Asn-200 is a 4-nitrobenzoate binding site. Fe cation is bound by residues His-223, Glu-227, and His-230.

The protein belongs to the AurF N-oxygenase family. In terms of assembly, homodimer. Requires Fe(2+) as cofactor.

The catalysed reaction is 4-aminobenzoate + AH2 + 2 O2 = 4-nitrobenzoate + A + 2 H2O. The protein operates within antibiotic biosynthesis. Involved in the biosynthesis of the polyketide antibiotic aureothin. Catalyzes the oxidation of p-aminobenzoate (pABA) to p-nitrobenzoate (pNBA), an unusual polyketide synthase starter unit. Reaction mechanism involves the generation of a peroxodiiron(III/III) intermediate, which effects the initial oxidation of p-aminobenzoate to p-hydroxylaminobenzoate (Ar-NHOH). Ar-NHOH is then probably directly converted to the fully oxidized p-nitrobenzoate via a four-electron N-oxidation, bypassing the formation of a nitroso compound. This Streptomyces thioluteus protein is 4-aminobenzoate N-oxygenase.